The following is a 660-amino-acid chain: MSAIESVMQEHRVFNPPASFAKTAAIPSMEAYQALCDEAAKDYEGFWARHARELLHWHKPFTKVLDESNAPFYKWFEDGEINASYNCLDRNVEKGLGDKTAIVFEADDGTVTRVSYQELLAKVSRFANGMKALGIKKGDRVVIYMPMSVEGVVAMQACARIGATHSVVFGGFSAKSLQERLVDVGAVALITADEQMRGGKALPLKAIADEALTLGGCEAVKNVIVYRRTGGNVAWTEGRDRSMEDVAAGQSDNCPAEPVGAEHPLFVLYTSGSTGKPKGVQHSTGGYLLWALMTMRWTFDIKPDDMFWCTADIGWVTGHTYITYGPLAAGATQIVFEGVPTFPNAGRFWDMIQRHKVSIFYTAPTAIRSLIKAAEADEKIHPKQYDLSSLRLLGTVGEPINPEAWMWYYKNIGRERCPIVDTFWQTETGGHMITPLPGATPLVPGSCTLPLPGIMAAIVDETGQDVPNGNGGILVVKRPWPSMIRTIWGDPERFKKSYYPEELGGKLYLAGDGSIRDKETGYFTIMGRIDDVLNVSGHRMGTMEIESALVSNPIVAEAAVVGRPDDTTGEAICAFVVLKRSRPTAEEAVKIAAELRNWVGKEIGPIAKPKDIRFGDNLPKTRSGKIMRRLLRSLAKGEDITQDTSTLENPAILDQLKQAQ.

CoA is bound by residues 197-200 (RGGK) and threonine 317. ATP-binding positions include 397–399 (GEP), 421–426 (DTFWQT), aspartate 512, and arginine 528. Serine 536 is a binding site for CoA. Position 539 (arginine 539) interacts with ATP. The Mg(2+) site is built by valine 550 and valine 555. An N6-acetyllysine modification is found at lysine 625.

The protein belongs to the ATP-dependent AMP-binding enzyme family. The cofactor is Mg(2+). In terms of processing, acetylated. Deacetylation by the SIR2-homolog deacetylase activates the enzyme.

The catalysed reaction is acetate + ATP + CoA = acetyl-CoA + AMP + diphosphate. Catalyzes the conversion of acetate into acetyl-CoA (AcCoA), an essential intermediate at the junction of anabolic and catabolic pathways. AcsA undergoes a two-step reaction. In the first half reaction, AcsA combines acetate with ATP to form acetyl-adenylate (AcAMP) intermediate. In the second half reaction, it can then transfer the acetyl group from AcAMP to the sulfhydryl group of CoA, forming the product AcCoA. The polypeptide is Acetyl-coenzyme A synthetase (Cupriavidus metallidurans (strain ATCC 43123 / DSM 2839 / NBRC 102507 / CH34) (Ralstonia metallidurans)).